The primary structure comprises 1387 residues: Dicer-like protein 2-1 (1387 aa).

Residues 26-205 form the Helicase ATP-binding domain; sequence MFEASLKENI…LLKIESNLDA (180 aa). Residue 39–46 coordinates ATP; the sequence is MGTGSGKT. The DEAH box signature appears at 146 to 149; it reads DEAH. Residues 370–535 enclose the Helicase C-terminal domain; that stretch reads KFRSLLEFLD…AYEDDERRLR (166 aa). Residues 565–659 enclose the Dicer dsRNA-binding fold domain; sequence AVAHLNHFCA…LPFKRNLELK (95 aa). 2 consecutive RNase III domains span residues 915 to 1055 and 1094 to 1277; these read ATRL…IDGG and DDHL…IDSH. Mg(2+) is bound by residues Glu-1133, Asp-1263, and Glu-1266.

This sequence belongs to the helicase family. Dicer subfamily. The cofactor is Mg(2+). Mn(2+) serves as cofactor.

In terms of biological role, dicer-like endonuclease involved in cleaving double-stranded RNA in the RNA interference (RNAi) pathway. Produces 21 to 25 bp dsRNAs (siRNAs) which target the selective destruction of homologous RNAs leading to sequence-specific suppression of gene expression, called post-transcriptional gene silencing (PTGS). Part of a broad host defense response against viral infection and transposons. This is Dicer-like protein 2-1 (dcl2-1) from Aspergillus niger (strain ATCC MYA-4892 / CBS 513.88 / FGSC A1513).